The chain runs to 179 residues: MVQAWYMDDSTEDQRKPHHLQPEQPVSLEQLKAVGVHSFSLDADRYESDPELAKIRQENNYTWMDIITIHKDTLPNYEEKLKIFYEEHLHLDDEIRYILEGSGYFDVRDKEDRWIRIFMQKGDMITLPAGIYHRFTLDENNYVKAMRLFVGDPVWTPYNRPADNFEAREKYVQFLTQTV.

The interval Met1–Gln21 is disordered. Fe(2+) contacts are provided by His88, His90, Glu94, and His133. His88, His90, Glu94, and His133 together coordinate Ni(2+).

Belongs to the acireductone dioxygenase (ARD) family. Monomer. Interacts with MMP14. Fe(2+) serves as cofactor. Requires Ni(2+) as cofactor.

Its subcellular location is the cytoplasm. It localises to the nucleus. The protein resides in the cell membrane. It catalyses the reaction 1,2-dihydroxy-5-(methylsulfanyl)pent-1-en-3-one + O2 = 4-methylsulfanyl-2-oxobutanoate + formate + 2 H(+). The enzyme catalyses 1,2-dihydroxy-5-(methylsulfanyl)pent-1-en-3-one + O2 = 3-(methylsulfanyl)propanoate + CO + formate + 2 H(+). Its pathway is amino-acid biosynthesis; L-methionine biosynthesis via salvage pathway; L-methionine from S-methyl-5-thio-alpha-D-ribose 1-phosphate: step 5/6. Its function is as follows. Catalyzes 2 different reactions between oxygen and the acireductone 1,2-dihydroxy-3-keto-5-methylthiopentene (DHK-MTPene) depending upon the metal bound in the active site. Fe-containing acireductone dioxygenase (Fe-ARD) produces formate and 2-keto-4-methylthiobutyrate (KMTB), the alpha-ketoacid precursor of methionine in the methionine recycle pathway. Ni-containing acireductone dioxygenase (Ni-ARD) produces methylthiopropionate, carbon monoxide and formate, and does not lie on the methionine recycle pathway. This Xenopus tropicalis (Western clawed frog) protein is Acireductone dioxygenase (adi1).